Consider the following 130-residue polypeptide: Small ribosomal subunit protein uS9 (130 aa).

The interval 109–130 (RMKERKKYGLKGARRAPQFSKR) is disordered. Positions 111 to 130 (KERKKYGLKGARRAPQFSKR) are enriched in basic residues.

The protein belongs to the universal ribosomal protein uS9 family.

This chain is Small ribosomal subunit protein uS9, found in Alkaliphilus metalliredigens (strain QYMF).